A 149-amino-acid chain; its full sequence is Ribosome-binding factor A (149 aa).

The disordered stretch occupies residues 125-149; sequence FGSADEVLNEDEGATDDTDDTKGKD. Residues 131–143 are compositionally biased toward acidic residues; sequence VLNEDEGATDDTD.

This sequence belongs to the RbfA family. Monomer. Binds 30S ribosomal subunits, but not 50S ribosomal subunits or 70S ribosomes.

It is found in the cytoplasm. In terms of biological role, one of several proteins that assist in the late maturation steps of the functional core of the 30S ribosomal subunit. Associates with free 30S ribosomal subunits (but not with 30S subunits that are part of 70S ribosomes or polysomes). Required for efficient processing of 16S rRNA. May interact with the 5'-terminal helix region of 16S rRNA. The chain is Ribosome-binding factor A from Shewanella sp. (strain W3-18-1).